The following is a 313-amino-acid chain: MTHNQELIETIIADQVHQELHSIQDFLRWTYSTFNRSDIYYGHGYNNAWDEALQLILTTLALPIDFPNEYYAAHLTRSEKEVLLRLIIQRLEKRIPVAYLTHQAWFCGLNFYVDERVIVPRSPISALIQEGFAPLLPQEPKRILDMCTGSGCIAIACAERFPEAEVDAVDLSSDALDVAQINIERHNMLDRVYPIQSDLFHDLAKDQYDLIVANPPYVDLEDLSDMPAEFHHEPEMALGSGVDGLEITKKILYAAPDYLTEQGVLVCEVGNSMVHLIEQYPDVPFNWVELKNGGVGVFALTQAELMQYRHLFQ.

Belongs to the protein N5-glutamine methyltransferase family. PrmB subfamily.

It catalyses the reaction L-glutaminyl-[ribosomal protein uL3] + S-adenosyl-L-methionine = N(5)-methyl-L-glutaminyl-[ribosomal protein uL3] + S-adenosyl-L-homocysteine + H(+). Methylates large ribosomal subunit protein uL3 on a specific glutamine residue. The polypeptide is Ribosomal protein uL3 glutamine methyltransferase (Pasteurella multocida (strain Pm70)).